The sequence spans 166 residues: Calmodulin-like protein 5 (166 aa).

EF-hand domains lie at 11–46, 47–82, 96–131, and 132–166; these read EQVA…LGQT, PTRE…KASR, AADE…LGEK, and LTDE…LSDQ. Ca(2+) is bound by residues Asp24, Asp26, Asp28, Cys30, Glu35, Asp60, Asp62, Asn64, Thr66, Glu71, Asp109, Asp111, Asp113, and Glu120. An N6,N6,N6-trimethyllysine modification is found at Lys131. Residues Asp145, Asp147, Asp149, Gln151, and Glu156 each contribute to the Ca(2+) site.

This sequence belongs to the calmodulin family.

Its function is as follows. Potential calcium sensor. The protein is Calmodulin-like protein 5 (CML5) of Oryza sativa subsp. japonica (Rice).